The primary structure comprises 479 residues: Probable acyl-CoA desaturase (479 aa).

Positions 1–18 (MTAPSATAFSSATTQPTT) are enriched in low complexity. Positions 1-28 (MTAPSATAFSSATTQPTTEGNASMRKRT) are disordered. The Cytoplasmic portion of the chain corresponds to 1–61 (MTAPSATAFS…PWTMQNWWRH (61 aa)). Residues 62-82 (LNWLHCMLIFGLPMIAIYGVF) form a helical membrane-spanning segment. Residues 83–89 (TTPLQTK) lie on the Lumenal side of the membrane. The helical transmembrane segment at 90–110 (TLIFAIIYYAYSGLGITAGYH) threads the bilayer. Residues histidine 110, histidine 115, histidine 147, histidine 150, and histidine 151 each contribute to the Fe cation site. A Histidine box-1 motif is present at residues 110 to 115 (HRLWSH). The Cytoplasmic portion of the chain corresponds to 111–204 (RLWSHRAYKA…DPFVMFNHRH (94 aa)). The Histidine box-2 signature appears at 147–151 (HRAHH). The helical transmembrane segment at 205–225 (FLPIASFMAFIFPSLFCGLLW) threads the bilayer. Over 226-229 (GDYR) the chain is Lumenal. A helical transmembrane segment spans residues 230–250 (GGYFYAGVCRLVFVHHATFCV). Topologically, residues 251 to 479 (NSLAHLIGSQ…QPPIEAAAAN (229 aa)) are cytoplasmic. Residues histidine 255, histidine 284, histidine 287, and histidine 288 each coordinate Fe cation. The short motif at 284–288 (HNYHH) is the Histidine box-3 element. The region spanning 357–433 (QLPVMEFEDF…LSTYRVAVVR (77 aa)) is the Cytochrome b5 heme-binding domain. 2 residues coordinate heme: histidine 390 and histidine 416.

The protein belongs to the fatty acid desaturase type 1 family. Fe(2+) serves as cofactor.

The protein resides in the membrane. It carries out the reaction octadecanoyl-CoA + 2 Fe(II)-[cytochrome b5] + O2 + 2 H(+) = (9Z)-octadecenoyl-CoA + 2 Fe(III)-[cytochrome b5] + 2 H2O. In terms of biological role, stearoyl-CoA desaturase that utilizes O(2) and electrons from reduced cytochrome b5 to introduce the first double bond into saturated fatty acyl-CoA substrates. Catalyzes the insertion of a cis double bond at the delta-9 position into fatty acyl-CoA substrates including palmitoyl-CoA and stearoyl-CoA. Contributes to the biosynthesis of membrane phospholipids, cholesterol esters and triglycerides. The sequence is that of Probable acyl-CoA desaturase from Schizosaccharomyces pombe (strain 972 / ATCC 24843) (Fission yeast).